Reading from the N-terminus, the 921-residue chain is Isoleucine--tRNA ligase (921 aa).

Positions 57–67 (PYANGDIHMGH) match the 'HIGH' region motif. L-isoleucyl-5'-AMP is bound at residue E552. The 'KMSKS' region motif lies at 593-597 (KMSKS). K596 lines the ATP pocket. Zn(2+) is bound by residues C888, C891, C908, and C911.

It belongs to the class-I aminoacyl-tRNA synthetase family. IleS type 1 subfamily. In terms of assembly, monomer. It depends on Zn(2+) as a cofactor.

It is found in the cytoplasm. The catalysed reaction is tRNA(Ile) + L-isoleucine + ATP = L-isoleucyl-tRNA(Ile) + AMP + diphosphate. Functionally, catalyzes the attachment of isoleucine to tRNA(Ile). As IleRS can inadvertently accommodate and process structurally similar amino acids such as valine, to avoid such errors it has two additional distinct tRNA(Ile)-dependent editing activities. One activity is designated as 'pretransfer' editing and involves the hydrolysis of activated Val-AMP. The other activity is designated 'posttransfer' editing and involves deacylation of mischarged Val-tRNA(Ile). This is Isoleucine--tRNA ligase from Bacillus cereus (strain 03BB102).